The following is a 415-amino-acid chain: Serine hydroxymethyltransferase (415 aa).

Residues Leu117 and 121-123 (GHL) each bind (6S)-5,6,7,8-tetrahydrofolate. Lys226 is subject to N6-(pyridoxal phosphate)lysine.

It belongs to the SHMT family. As to quaternary structure, homodimer. It depends on pyridoxal 5'-phosphate as a cofactor.

It is found in the cytoplasm. It catalyses the reaction (6R)-5,10-methylene-5,6,7,8-tetrahydrofolate + glycine + H2O = (6S)-5,6,7,8-tetrahydrofolate + L-serine. Its pathway is one-carbon metabolism; tetrahydrofolate interconversion. It participates in amino-acid biosynthesis; glycine biosynthesis; glycine from L-serine: step 1/1. Its function is as follows. Catalyzes the reversible interconversion of serine and glycine with tetrahydrofolate (THF) serving as the one-carbon carrier. This reaction serves as the major source of one-carbon groups required for the biosynthesis of purines, thymidylate, methionine, and other important biomolecules. Also exhibits THF-independent aldolase activity toward beta-hydroxyamino acids, producing glycine and aldehydes, via a retro-aldol mechanism. The polypeptide is Serine hydroxymethyltransferase (Dehalococcoides mccartyi (strain CBDB1)).